Consider the following 90-residue polypeptide: Small ribosomal subunit protein uS15 (90 aa).

It belongs to the universal ribosomal protein uS15 family. Part of the 30S ribosomal subunit. Forms a bridge to the 50S subunit in the 70S ribosome, contacting the 23S rRNA.

In terms of biological role, one of the primary rRNA binding proteins, it binds directly to 16S rRNA where it helps nucleate assembly of the platform of the 30S subunit by binding and bridging several RNA helices of the 16S rRNA. Its function is as follows. Forms an intersubunit bridge (bridge B4) with the 23S rRNA of the 50S subunit in the ribosome. The polypeptide is Small ribosomal subunit protein uS15 (Wolinella succinogenes (strain ATCC 29543 / DSM 1740 / CCUG 13145 / JCM 31913 / LMG 7466 / NCTC 11488 / FDC 602W) (Vibrio succinogenes)).